The sequence spans 201 residues: UPF0301 protein RHA1_ro03630 (201 aa).

Belongs to the UPF0301 (AlgH) family.

In Rhodococcus jostii (strain RHA1), this protein is UPF0301 protein RHA1_ro03630.